The following is a 105-amino-acid chain: V-type ATP synthase subunit F (105 aa).

The protein belongs to the V-ATPase F subunit family.

Functionally, produces ATP from ADP in the presence of a proton gradient across the membrane. This is V-type ATP synthase subunit F from Clostridium perfringens (strain 13 / Type A).